The following is a 525-amino-acid chain: Keratin, type II cytoskeletal 4 (525 aa).

A head region spans residues Met1 to Ala145. Arg13 carries the post-translational modification Omega-N-methylarginine. Positions Glu146–Leu181 are coil 1A. The 314-residue stretch at Glu146 to Met459 folds into the IF rod domain. The interval Gln182–Tyr200 is linker 1. Residues Ile201 to Met292 are coil 1B. Positions Gln293 to Ile316 are linker 12. Residues Ile317–Glu455 are coil 2. The interval Glu456 to Pro524 is tail.

This sequence belongs to the intermediate filament family. Heterotetramer of two type I and two type II keratins. Keratin-4 is generally associated with keratin-13. Expressed in the dorsal and ventral epithelium of the tongue. Highest expression levels are detected in the suprabasal layer with low levels detected in the basal cell layer. Within the suprabasal layer expression is highest in the spinous cells, decreases in the granular cells and is not detected in the stratum corneum.

The polypeptide is Keratin, type II cytoskeletal 4 (Krt4) (Mus musculus (Mouse)).